Here is a 120-residue protein sequence, read N- to C-terminus: Chemokine vCXCL1 (120 aa).

It belongs to the intercrine alpha (chemokine CxC) family. In terms of assembly, interacts with host CXCR1 and CXCR2.

In terms of biological role, acts as a functional chemokine, inducing calcium mobilization, chemotaxis, and degranulation of neutrophils. Contributes to the induction of neutrophil chemotaxis by interacting with host CXCR1 and CXCR2 receptors. In Human cytomegalovirus (strain Merlin) (HHV-5), this protein is Chemokine vCXCL1 (UL146).